The primary structure comprises 180 residues: Der GTPase-activating protein YihI (180 aa).

2 disordered regions span residues 1–87 (MSRK…MTKQ) and 142–180 (GLLE…DYKG). Over residues 23–32 (NRTESDVEGR) the composition is skewed to basic and acidic residues. The segment covering 33–43 (LRKRAKKRKGL) has biased composition (basic residues). Positions 51–68 (EVNEQKKQSSEQNRDPRL) are enriched in basic and acidic residues. Over residues 165–180 (DLLADFDDINFDDYKG) the composition is skewed to acidic residues.

Belongs to the YihI family. As to quaternary structure, interacts with Der.

Its function is as follows. A GTPase-activating protein (GAP) that modifies Der/EngA GTPase function. May play a role in ribosome biogenesis. The sequence is that of Der GTPase-activating protein YihI from Vibrio parahaemolyticus serotype O3:K6 (strain RIMD 2210633).